We begin with the raw amino-acid sequence, 401 residues long: Argininosuccinate synthase (401 aa).

8 to 16 lines the ATP pocket; that stretch reads AYSGGLDTS. Tyr-86 is a binding site for L-citrulline. Residue Gly-116 participates in ATP binding. L-aspartate-binding residues include Thr-118, Asn-122, and Asp-123. Asn-122 provides a ligand contact to L-citrulline. L-citrulline contacts are provided by Arg-126, Ser-174, Glu-258, and Tyr-270.

The protein belongs to the argininosuccinate synthase family. Type 1 subfamily. As to quaternary structure, homotetramer.

Its subcellular location is the cytoplasm. It carries out the reaction L-citrulline + L-aspartate + ATP = 2-(N(omega)-L-arginino)succinate + AMP + diphosphate + H(+). The protein operates within amino-acid biosynthesis; L-arginine biosynthesis; L-arginine from L-ornithine and carbamoyl phosphate: step 2/3. In Acidothermus cellulolyticus (strain ATCC 43068 / DSM 8971 / 11B), this protein is Argininosuccinate synthase.